Reading from the N-terminus, the 189-residue chain is dCTP deaminase (189 aa).

DCTP contacts are provided by residues 112–117 (KSTYAR), 136–138 (TLE), glutamine 157, tyrosine 171, and glutamine 181. The active-site Proton donor/acceptor is glutamate 138.

Belongs to the dCTP deaminase family. In terms of assembly, homotrimer.

It catalyses the reaction dCTP + H2O + H(+) = dUTP + NH4(+). Its pathway is pyrimidine metabolism; dUMP biosynthesis; dUMP from dCTP (dUTP route): step 1/2. Its function is as follows. Catalyzes the deamination of dCTP to dUTP. This is dCTP deaminase from Xanthomonas oryzae pv. oryzae (strain MAFF 311018).